The sequence spans 280 residues: Lysosome-associated membrane glycoprotein 5 (280 aa).

The signal sequence occupies residues 1–29 (MDLQGRGVPSIDRLRVLLMLFHTMAQIMA). Residues 30 to 235 (EQEVENLSGL…PVDEREQLEE (206 aa)) lie on the Extracellular side of the membrane. Asn-35, Asn-53, and Asn-127 each carry an N-linked (GlcNAc...) asparagine glycan. The helical transmembrane segment at 236–256 (TLPLILGLILGLVIMVTLAIY) threads the bilayer. The Cytoplasmic segment spans residues 257 to 280 (HVHHKMTANQVQIPRDRSQYKHMG).

It belongs to the LAMP family. In terms of processing, glycosylated. Expressed in plasmocytoid dendritic cells. Expressed in suprabasal skin keratinocytes and squamous cells (at protein level). Expressed in the brain and weakly in spleen and skin. Expressed in plasmocytoid dendritic cells.

Its subcellular location is the cell membrane. The protein localises to the cytoplasmic vesicle. The protein resides in the secretory vesicle. It localises to the synaptic vesicle membrane. It is found in the endoplasmic reticulum-Golgi intermediate compartment membrane. Its subcellular location is the endosome membrane. The protein localises to the cytoplasmic vesicle membrane. The protein resides in the cell projection. It localises to the dendrite. It is found in the growth cone membrane. Its subcellular location is the early endosome membrane. The protein localises to the recycling endosome. Functionally, plays a role in short-term synaptic plasticity in a subset of GABAergic neurons in the brain. In Homo sapiens (Human), this protein is Lysosome-associated membrane glycoprotein 5 (LAMP5).